We begin with the raw amino-acid sequence, 955 residues long: Centrosomal protein of 112 kDa (955 aa).

The stretch at 277–954 (QKHDADVQKI…QEELTTYQGR (678 aa)) forms a coiled coil.

Its subcellular location is the cytoplasm. It is found in the cytoskeleton. The protein localises to the microtubule organizing center. The protein resides in the centrosome. The chain is Centrosomal protein of 112 kDa (CEP112) from Homo sapiens (Human).